Here is a 356-residue protein sequence, read N- to C-terminus: Guanine nucleotide-binding protein alpha-15 subunit (356 aa).

The N-myristoyl glycine moiety is linked to residue G2. C5 carries the S-palmitoyl cysteine lipid modification. Positions 33–356 constitute a G-alpha domain; it reads GNQKLLLLGT…GRNLRGTGME (324 aa). Positions 36 to 49 are G1 motif; that stretch reads KLLLLGTGECGKST. GTP is bound by residues 41–48, 177–183, 202–206, 271–274, and A328; these read GTGECGKS, LRIRIPT, DVGGQ, and NKRD. Positions 48 and 183 each coordinate Mg(2+). The G2 motif stretch occupies residues 175–183; the sequence is DMLRIRIPT. The tract at residues 198 to 207 is G3 motif; it reads FRIYDVGGQR. The tract at residues 267-274 is G4 motif; the sequence is ILFLNKRD. The G5 motif stretch occupies residues 326-331; sequence TCATDT.

This sequence belongs to the G-alpha family. In terms of assembly, g proteins are composed of 3 units; alpha, beta and gamma. The alpha chain contains the guanine nucleotide binding site.

In terms of biological role, guanine nucleotide-binding proteins (G proteins) are involved as modulators or transducers in various transmembrane signaling systems. The chain is Guanine nucleotide-binding protein alpha-15 subunit (gpa-15) from Caenorhabditis elegans.